The chain runs to 752 residues: Probable cell surface ferric reductase kap2 (752 aa).

The helical transmembrane segment at 40–60 (GKYGLGWVYFSVILLAISTII) threads the bilayer. N118 and N133 each carry an N-linked (GlcNAc...) asparagine glycan. The next 2 membrane-spanning stretches (helical) occupy residues 157-177 (IGFP…FVTL) and 195-215 (PPLA…IIAL). Residues 201 to 348 (AGMIAVAMIP…WATVAIWMLS (148 aa)) enclose the Ferric oxidoreductase domain. Heme is bound by residues H237 and H251. 3 helical membrane-spanning segments follow: residues 241 to 261 (GYLC…TPIW), 281 to 301 (GTGW…LPIL), and 306 to 326 (YELF…MIFW). 2 residues coordinate heme: H313 and H327. A helical membrane pass occupies residues 331–351 (FLASWDYLWATVAIWMLSYAV). Positions 349 to 475 (YAVRLFYVNW…EGPYGGMKRD (127 aa)) constitute an FAD-binding FR-type domain. N-linked (GlcNAc...) asparagine glycosylation is present at N357. 467-470 (GPYG) contacts NADP(+). The chain crosses the membrane as a helical span at residues 482–502 (VVFFAGGSGITATASHLLNLI). A glycan (N-linked (GlcNAc...) asparagine) is linked at N627. Residue 714–715 (CG) participates in NADP(+) binding.

The protein belongs to the ferric reductase (FRE) family. FAD serves as cofactor. Requires heme as cofactor.

The protein localises to the cell membrane. The enzyme catalyses 2 a Fe(II)-siderophore + NADP(+) + H(+) = 2 a Fe(III)-siderophore + NADPH. Functionally, probable cell surface ferric reductase that acts as a negative regulatory factor of growth and development. Involved in kojic acid production through the regulation of kojA expression. The chain is Probable cell surface ferric reductase kap2 from Aspergillus oryzae (strain ATCC 42149 / RIB 40) (Yellow koji mold).